A 288-amino-acid polypeptide reads, in one-letter code: MSPNPTNIHTGKTLRLLYHPASQPCRSAHQFMYEIDVPFEEEVVDISTDITERQEFRDKYNPTGQVPILVDGEFTVWESVAIARYVNEKFDGAGNWFGRGTQERAQINQFLQWYAYTLRLGGGAFHWNIFGCLIYGEKPYSPKFTAEQNKGRTLLYEAMGTLENYWLRDREYVCGDEVSYADLAAFHEFVSHEAGKIIPDRVWQGFPKIAAWFKKLSERPHAKTVSEWQYTNVGKIIRGELTASMFKRKTAVLKGTEVFSGHNHGIPYLNEKAEDYFKRVEKEGAAVA.

The 83-residue stretch at 12–94 folds into the GST N-terminal domain; the sequence is KTLRLLYHPA…YVNEKFDGAG (83 aa). In terms of domain architecture, GST C-terminal spans 100-252; it reads GTQERAQINQ…ASMFKRKTAV (153 aa).

This sequence belongs to the GST superfamily. In terms of assembly, homohexamer.

It is found in the cytoplasm. It carries out the reaction dichloromethane + H2O = formaldehyde + 2 chloride + 2 H(+). It participates in xenobiotic degradation; dichloromethane degradation. This Methylorubrum extorquens (strain DSM 6343 / CIP 106787 / DM4) (Methylobacterium extorquens) protein is Dichloromethane dehalogenase (dcmA).